We begin with the raw amino-acid sequence, 96 residues long: Cell division topological specificity factor (96 aa).

Belongs to the MinE family.

Functionally, prevents the cell division inhibition by proteins MinC and MinD at internal division sites while permitting inhibition at polar sites. This ensures cell division at the proper site by restricting the formation of a division septum at the midpoint of the long axis of the cell. The sequence is that of Cell division topological specificity factor from Nitrosococcus oceani (strain ATCC 19707 / BCRC 17464 / JCM 30415 / NCIMB 11848 / C-107).